We begin with the raw amino-acid sequence, 82 residues long: MVKLRLKRYGRKQQPSYRIVAMDSRSKRDGKAIEELGFYNPITNETRIDIAKILKRLKQGAQTTRTVKNILNEAQIIAKENS.

It belongs to the bacterial ribosomal protein bS16 family.

It localises to the plastid. The protein resides in the chloroplast. The protein is Small ribosomal subunit protein bS16c of Porphyra purpurea (Red seaweed).